We begin with the raw amino-acid sequence, 95 residues long: Small ribosomal subunit protein bS6 (95 aa).

It belongs to the bacterial ribosomal protein bS6 family.

In terms of biological role, binds together with bS18 to 16S ribosomal RNA. This is Small ribosomal subunit protein bS6 (rpsF) from Halalkalibacterium halodurans (strain ATCC BAA-125 / DSM 18197 / FERM 7344 / JCM 9153 / C-125) (Bacillus halodurans).